The primary structure comprises 118 residues: UPF0382 membrane protein C1782.12c (118 aa).

The first 18 residues, 1-18, serve as a signal peptide directing secretion; the sequence is MTIWNVAALTGLLSVGLG. Topologically, residues 19-40 are lumenal; that stretch reads AYGSHGLQKRVQDPHLLKSWST. Residues 41 to 61 traverse the membrane as a helical segment; it reads ACTYLMFHSLATMAVSLHPVY. Over 62-67 the chain is Cytoplasmic; the sequence is GKSRWT. The chain crosses the membrane as a helical span at residues 68-88; it reads GPLLITGSCLFSGTIYGLCLL. The Lumenal portion of the chain corresponds to 89-96; sequence PKGHSLRR. The helical transmembrane segment at 97–117 threads the bilayer; sequence ILGPLTPIGGLVMLTGWATML. Position 118 (valine 118) is a topological domain, cytoplasmic.

This sequence belongs to the UPF0382 family.

The protein resides in the endoplasmic reticulum membrane. The polypeptide is UPF0382 membrane protein C1782.12c (Schizosaccharomyces pombe (strain 972 / ATCC 24843) (Fission yeast)).